The following is a 453-amino-acid chain: Asparagine--tRNA ligase (453 aa).

The protein belongs to the class-II aminoacyl-tRNA synthetase family. Homodimer.

The protein resides in the cytoplasm. It carries out the reaction tRNA(Asn) + L-asparagine + ATP = L-asparaginyl-tRNA(Asn) + AMP + diphosphate + H(+). This chain is Asparagine--tRNA ligase, found in Malacoplasma penetrans (strain HF-2) (Mycoplasma penetrans).